A 284-amino-acid polypeptide reads, in one-letter code: Neutral protease 2 homolog AFLA_119780 (284 aa).

2 disulfides stabilise this stretch: Cys113/Cys185 and Cys192/Cys210. Residue His235 coordinates Zn(2+). Glu236 is an active-site residue. Positions 239 and 250 each coordinate Zn(2+).

Belongs to the peptidase M35 family. Zn(2+) is required as a cofactor.

It is found in the secreted. It catalyses the reaction Preferential cleavage of bonds with hydrophobic residues in P1'. Also 3-Asn-|-Gln-4 and 8-Gly-|-Ser-9 bonds in insulin B chain.. Functionally, secreted metalloproteinase that allows assimilation of proteinaceous substrates. Shows high activities on basic nuclear substrates such as histone and protamine. The sequence is that of Neutral protease 2 homolog AFLA_119780 from Aspergillus flavus (strain ATCC 200026 / FGSC A1120 / IAM 13836 / NRRL 3357 / JCM 12722 / SRRC 167).